The following is a 356-amino-acid chain: Phosphoserine aminotransferase (356 aa).

Arg41 lines the L-glutamate pocket. Pyridoxal 5'-phosphate contacts are provided by residues 75–76 (AT), Trp100, Thr147, Asp166, and Gln189. An N6-(pyridoxal phosphate)lysine modification is found at Lys190. 227 to 228 (NT) is a binding site for pyridoxal 5'-phosphate.

The protein belongs to the class-V pyridoxal-phosphate-dependent aminotransferase family. SerC subfamily. Homodimer. The cofactor is pyridoxal 5'-phosphate.

The protein resides in the cytoplasm. The catalysed reaction is O-phospho-L-serine + 2-oxoglutarate = 3-phosphooxypyruvate + L-glutamate. It carries out the reaction 4-(phosphooxy)-L-threonine + 2-oxoglutarate = (R)-3-hydroxy-2-oxo-4-phosphooxybutanoate + L-glutamate. It functions in the pathway amino-acid biosynthesis; L-serine biosynthesis; L-serine from 3-phospho-D-glycerate: step 2/3. In terms of biological role, catalyzes the reversible conversion of 3-phosphohydroxypyruvate to phosphoserine and of 3-hydroxy-2-oxo-4-phosphonooxybutanoate to phosphohydroxythreonine. This Exiguobacterium sp. (strain ATCC BAA-1283 / AT1b) protein is Phosphoserine aminotransferase.